A 336-amino-acid polypeptide reads, in one-letter code: uncharacterized protein (336 aa).

An N-terminal signal peptide occupies residues 1–33 (MGSAWPAEIRKIAKISKRLLGATVILGFGVAEA).

This is an uncharacterized protein from Sinorhizobium fredii (strain NBRC 101917 / NGR234).